The primary structure comprises 316 residues: tRNA methyltransferase 10 homolog B (316 aa).

Disordered regions lie at residues 1–30 (MDCEWEGRPQRAGSRASQDPEGLPEARDDG) and 42–98 (VEYD…DLGN). Over residues 63–82 (VQRKQRHWERIVSSKKSKRK) the composition is skewed to basic residues. Residues 75–96 (SSKKSKRKQERERRKIKRAEDL) adopt a coiled-coil conformation. The segment covering 83-95 (QERERRKIKRAED) has biased composition (basic and acidic residues). The 198-residue stretch at 113-310 (TKEKLLEAKH…KGVSPGKGYI (198 aa)) folds into the SAM-dependent MTase TRM10-type domain.

Belongs to the class IV-like SAM-binding methyltransferase superfamily. TRM10 family.

It catalyses the reaction guanosine(9) in tRNA + S-adenosyl-L-methionine = N(1)-methylguanosine(9) in tRNA + S-adenosyl-L-homocysteine + H(+). Functionally, S-adenosyl-L-methionine-dependent guanine N(1)-methyltransferase that catalyzes the formation of N(1)-methylguanine at position 9 (m1G9) in tRNAs. Probably not able to catalyze formation of N(1)-methyladenine at position 9 (m1A9) in tRNAs. The protein is tRNA methyltransferase 10 homolog B (Trmt10b) of Rattus norvegicus (Rat).